The chain runs to 201 residues: UPF0637 protein LCA_0842 (201 aa).

This sequence belongs to the UPF0637 family.

In Latilactobacillus sakei subsp. sakei (strain 23K) (Lactobacillus sakei subsp. sakei), this protein is UPF0637 protein LCA_0842.